The chain runs to 130 residues: Large ribosomal subunit protein eL34 (130 aa).

Residues 111-130 (KPVSKPPKIQKTAKAASKSK) form a disordered region.

It belongs to the eukaryotic ribosomal protein eL34 family.

The protein is Large ribosomal subunit protein eL34 (RpL34) of Aedes albopictus (Asian tiger mosquito).